We begin with the raw amino-acid sequence, 102 residues long: Putative pterin-4-alpha-carbinolamine dehydratase (102 aa).

Belongs to the pterin-4-alpha-carbinolamine dehydratase family.

It catalyses the reaction (4aS,6R)-4a-hydroxy-L-erythro-5,6,7,8-tetrahydrobiopterin = (6R)-L-erythro-6,7-dihydrobiopterin + H2O. The polypeptide is Putative pterin-4-alpha-carbinolamine dehydratase (Burkholderia cenocepacia (strain HI2424)).